Reading from the N-terminus, the 580-residue chain is TRAF-type zinc finger domain-containing protein 1 (580 aa).

Alanine 2 carries the post-translational modification N-acetylalanine. Residues 27–103 (IHEIHCQRNI…DLELSVLKLK (77 aa)) form a TRAF-type zinc finger. Serine 190 bears the Phosphoserine mark. Over residues 197–209 (TTNQRSMTAQFPI) the composition is skewed to polar residues. Residues 197–236 (TTNQRSMTAQFPIQNNLLEEQERQERNRSRQTPKERGEDS) form a disordered region. Residues 216 to 235 (EQERQERNRSRQTPKERGED) show a composition bias toward basic and acidic residues. A phosphoserine mark is found at serine 326, serine 414, and serine 429. Residues 392–580 (PATANNHVSE…GAGDAEEEEE (189 aa)) are disordered. Basic and acidic residues predominate over residues 409 to 419 (QPRETSPELPK). Over residues 453 to 463 (PPNNTTAPPNR) the composition is skewed to low complexity. Serine 469 is subject to Phosphoserine.

Interacts with MAVS, TICAM1, TRAF1, TRAF2, TRAF3 and TRAF6.

Functionally, negative feedback regulator that controls excessive innate immune responses. Regulates both Toll-like receptor 4 (TLR4) and DDX58/RIG1-like helicases (RLH) pathways. May inhibit the LTR pathway by direct interaction with TRAF6 and attenuation of NF-kappa-B activation. May negatively regulate the RLH pathway downstream from MAVS and upstream of NF-kappa-B and IRF3. This Bos taurus (Bovine) protein is TRAF-type zinc finger domain-containing protein 1 (TRAFD1).